Reading from the N-terminus, the 92-residue chain is UPF0223 protein SERP0684 (92 aa).

It belongs to the UPF0223 family.

The sequence is that of UPF0223 protein SERP0684 from Staphylococcus epidermidis (strain ATCC 35984 / DSM 28319 / BCRC 17069 / CCUG 31568 / BM 3577 / RP62A).